The chain runs to 595 residues: Probable hydrolase M10 (595 aa).

The signal sequence occupies residues 1-23; it reads MRFTSTILLRVAVLLSLGGGSQT. N-linked (GlcNAc...) asparagine glycosylation is found at N59, N87, N266, N436, N457, and N561.

The protein belongs to the beta-lactamase family.

The protein operates within secondary metabolite biosynthesis. Probable hydrolase; part of the gene cluster that mediates the biosynthesis of squalestatin S1 (SQS1, also known as zaragozic acid A), a heavily oxidized fungal polyketide that offers potent cholesterol lowering activity by targeting squalene synthase (SS). SQS1 is composed of a 2,8-dioxobicyclic[3.2.1]octane-3,4,5-tricarboxyclic acid core that is connected to two lipophilic polyketide arms. These initial steps feature the priming of an unusual benzoic acid starter unit onto the highly reducing polyketide synthase pks2, followed by oxaloacetate extension and product release to generate a tricarboxylic acid containing product. The phenylalanine ammonia lyase (PAL) M7 and the acyl-CoA ligase M9 are involved in transforming phenylalanine into benzoyl-CoA. The citrate synthase-like protein R3 is involved in connecting the C-alpha-carbons of the hexaketide chain and oxaloacetate to afford the tricarboxylic acid unit. The potential hydrolytic enzymes, M8 and M10, are in close proximity to pks2 and may participate in product release. On the other side, the tetraketide arm is synthesized by a the squalestatin tetraketide synthase pks1 and enzymatically esterified to the core in the last biosynthetic step, by the acetyltransferase M4. The biosynthesis of the tetraketide must involve 3 rounds of chain extension. After the first and second rounds methyl-transfer occurs, and in all rounds of extension the ketoreductase and dehydratase are active. The enoyl reductase and C-MeT of pks1 are not active in the final round of extension. The acetyltransferase M4 appears to have a broad substrate selectivity for its acyl CoA substrate, allowing the in vitro synthesis of novel squalestatins. The biosynthesis of SQS1 requires several oxidative steps likely performed by oxidoreductases M1, R1 and R2. Finally, in support of the identification of the cluster as being responsible for SQS1 production, the cluster contains a gene encoding a putative squalene synthase (SS) R6, suggesting a likely mechanism for self-resistance. This is Probable hydrolase M10 from Phoma sp. (strain ATCC 20986 / MF5453).